A 709-amino-acid polypeptide reads, in one-letter code: Rho guanine nucleotide exchange factor 16 (709 aa).

Residue alanine 2 is modified to N-acetylalanine. Phosphoserine occurs at positions 6, 41, and 107. The tract at residues glutamate 22–proline 70 is disordered. The segment at serine 114 to arginine 146 is disordered. 3 positions are modified to phosphoserine: serine 174, serine 191, and serine 208. Residues leucine 180–lysine 246 are disordered. Positions serine 191–glycine 207 are enriched in basic residues. At threonine 226 the chain carries Phosphothreonine. Phosphoserine occurs at positions 227, 230, and 240. Residues leucine 275–leucine 481 form a required for RHOG activation and mediates interaction with EPHA2 region. The region spanning lysine 284 to glycine 468 is the DH domain. The PH domain maps to tryptophan 501–arginine 620. One can recognise an SH3 domain in the interval glycine 629 to serine 689. Residues threonine 707–valine 709 carry the PDZ-binding motif motif.

In terms of assembly, interacts with ELMO2, EPHA2, RAC1 and RHOG; mediates activation of RAC1 by EPHA2. Interacts with TAX1BP3 (via PDZ domain). May interact with CDC42; stimulated by HPV16 E6.

It localises to the cytoplasm. Functionally, guanyl-nucleotide exchange factor of the RHOG GTPase stimulating the exchange of RHOG-associated GDP for GTP. May play a role in chemotactic cell migration by mediating the activation of RAC1 by EPHA2. May also activate CDC42 and mediate activation of CDC42 by the viral protein HPV16 E6. The chain is Rho guanine nucleotide exchange factor 16 (ARHGEF16) from Homo sapiens (Human).